The primary structure comprises 56 residues: GSICLEPKVVGPCTAYFRRFYYDSETGKCTPFIHGGCEGNGNNFETLRACRAICRA.

The region spanning 4 to 54 (CLEPKVVGPCTAYFRRFYYDSETGKCTPFIHGGCEGNGNNFETLRACRAIC) is the BPTI/Kunitz inhibitor domain. Cystine bridges form between cysteine 4-cysteine 54, cysteine 13-cysteine 37, and cysteine 29-cysteine 50.

The protein belongs to the venom Kunitz-type family. Sea anemone type 2 potassium channel toxin subfamily.

Its subcellular location is the secreted. It localises to the nematocyst. Its function is as follows. This recombinant serine protease inhibitor inhibits trypsin (Ki=100 nM). It may also inhibit the TRPV1 receptor of the pain pathway. It possesses anti-inflammatory activity in vitro. It blocks histamine influence on intracellular calcium concentration in murine bone marrow-derived macrophages (84% inhibition at 10 uM and 67.2% at 1 uM), which can indicate inhibition of H1-histamine receptor (HRH1). In vitro, it shows cytoprotective activity in the oxidative stress agent 6-hydroxydopamine (6-OHDA)-induced neurotoxicity model. In this model, it decreases reactive oxygen species (ROS) level, and increases cell viability in a correlated manner. In vivo, it shows analgesic activity, since it increases hot plate and tail flick withdrawal latencies, when using a mice thermal pain stimulation model. This chain is PI-stichotoxin-Hcr2p, found in Radianthus crispa (Leathery sea anemone).